Consider the following 319-residue polypeptide: MDTTEKALKEVTPAMLSLNNCPGTTPGTPMSKNQLKKQRKLAEFAELRKLRREREREKKKQKRREAKELGLPVRTGPSRKELKKRQLADGGKSGLSVAIDLDYDDLMQERDIVKCVKQCLRIYTINRRSPQPGNLHFTGIRRNGHIHESFKKNEGWENWHVQYYFDRGHTDIFEHSQLVYLTCESDRVLDKLQPGCTYVIGGLVDHNHFKGLCHSRATSAGLTTARLPLSEHVDMKTRAVLSTYHVFELLTKVAAGQDWTTAILETIPMRKGAKAKITDKKEPNHCLEQQDEKQKQEAESDKPTLTAVESEIESHSLDS.

Disordered regions lie at residues 16–87 and 275–319; these read LSLN…KRQL and AKIT…SLDS. Residues 17-33 are compositionally biased toward polar residues; that stretch reads SLNNCPGTTPGTPMSKN. The Nuclear localization signal signature appears at 35-42; that stretch reads LKKQRKLA. Basic and acidic residues-rich tracts occupy residues 40–58, 78–87, and 276–302; these read KLAE…EREK, SRKELKKRQL, and KITD…ESDK. Residues 44–67 adopt a coiled-coil conformation; that stretch reads FAELRKLRREREREKKKQKRREAK. The 192-residue stretch at 83–274 folds into the SAM-dependent MTase TRM10-type domain; that stretch reads KKRQLADGGK…ETIPMRKGAK (192 aa).

Belongs to the class IV-like SAM-binding methyltransferase superfamily. TRM10 family.

It is found in the nucleus. It localises to the nucleolus. The protein localises to the chromosome. It carries out the reaction guanosine(9) in tRNA + S-adenosyl-L-methionine = N(1)-methylguanosine(9) in tRNA + S-adenosyl-L-homocysteine + H(+). Functionally, S-adenosyl-L-methionine-dependent guanine N(1)-methyltransferase that catalyzes the formation of N(1)-methylguanine at position 9 (m1G9) in tRNAs. Modulates Mettl3-mediated N6-methyladenosine (m6A) methylation of mRNA 5'-UTRs and 3'-UTRs independent of its methyltransferase activity; influences mRNA stability and protein levels, in particular of Hsp70 chaperone proteins and other stress response proteins. Also regulates stability of transcripts encoding proteins involved in signaling processes and proteins involved in neurogenesis and axon guidance pathways. In Drosophila melanogaster (Fruit fly), this protein is tRNA (guanine(9)-N(1))-methyltransferase Trmt10A.